Consider the following 175-residue polypeptide: General stress protein 14 (175 aa).

The protein belongs to the NAD(P)H dehydrogenase (quinone) family.

The polypeptide is General stress protein 14 (ywrO) (Bacillus subtilis (strain 168)).